The following is a 364-amino-acid chain: UDP-N-acetylglucosamine--N-acetylmuramyl-(pentapeptide) pyrophosphoryl-undecaprenol N-acetylglucosamine transferase (364 aa).

UDP-N-acetyl-alpha-D-glucosamine-binding positions include 15–17, N123, R164, S191, and Q286; that span reads TGG.

It belongs to the glycosyltransferase 28 family. MurG subfamily.

The protein localises to the cell inner membrane. It catalyses the reaction di-trans,octa-cis-undecaprenyl diphospho-N-acetyl-alpha-D-muramoyl-L-alanyl-D-glutamyl-meso-2,6-diaminopimeloyl-D-alanyl-D-alanine + UDP-N-acetyl-alpha-D-glucosamine = di-trans,octa-cis-undecaprenyl diphospho-[N-acetyl-alpha-D-glucosaminyl-(1-&gt;4)]-N-acetyl-alpha-D-muramoyl-L-alanyl-D-glutamyl-meso-2,6-diaminopimeloyl-D-alanyl-D-alanine + UDP + H(+). It participates in cell wall biogenesis; peptidoglycan biosynthesis. Functionally, cell wall formation. Catalyzes the transfer of a GlcNAc subunit on undecaprenyl-pyrophosphoryl-MurNAc-pentapeptide (lipid intermediate I) to form undecaprenyl-pyrophosphoryl-MurNAc-(pentapeptide)GlcNAc (lipid intermediate II). In Prochlorococcus marinus subsp. pastoris (strain CCMP1986 / NIES-2087 / MED4), this protein is UDP-N-acetylglucosamine--N-acetylmuramyl-(pentapeptide) pyrophosphoryl-undecaprenol N-acetylglucosamine transferase.